Here is a 637-residue protein sequence, read N- to C-terminus: CD2-associated protein (637 aa).

The SH3 1; truncated domain occupies 1–59; the sequence is MVDYIVEYDYDAVHDDELTIRVGEIIRNVKKLQEEGWLEGELNGRRGMFPDNFVKEIKR. Residues 1 to 175 form an interaction with ANLN and localization to the midbody region; that stretch reads MVDYIVEYDY…ESTEDGETHN (175 aa). Lysine 58 is covalently cross-linked (Glycyl lysine isopeptide (Lys-Gly) (interchain with G-Cter in SUMO2)). Residues serine 80 and serine 86 each carry the phosphoserine modification. The SH3 2 domain occupies 108–167; sequence TKKRQCKVLFDYSPQNEDELELIVGDVIDVIEEVEEGWWSGTLNNKLGLFPSNFVKELES. Basic and acidic residues predominate over residues 166 to 177; it reads ESTEDGETHNAQ. The segment at 166 to 209 is disordered; the sequence is ESTEDGETHNAQEESEVPLTGPTSPLPSPGNGSEPAPGSVAQPK. The residue at position 224 (serine 224) is a Phosphoserine. The disordered stretch occupies residues 226–254; it reads KLRTRTSSSETEEKKTEKPLILQPLGSRT. An SH3 3 domain is found at 269-330; the sequence is KAKEYCRTLF…PDNFAVQISE (62 aa). Residues 333–455 form a disordered region; the sequence is KDFPKPKKPP…KLDPEQLPVR (123 aa). Short sequence motifs (SH3-binding) lie at residues 336–352, 378–397, and 410–422; these read PKPK…APKP, KPSK…APTK, and PKRP…PPPP. A compositionally biased stretch (pro residues) spans 341 to 351; it reads PPPPAKGPAPK. Residues 356–379 are compositionally biased toward basic and acidic residues; sequence AAEKKAFPLKAEEKDEKSLLEQKP. Basic and acidic residues predominate over residues 437-449; sequence IDTEPVSKPKLDP. 4 positions are modified to phosphoserine: serine 458, serine 469, serine 510, and serine 514. A disordered region spans residues 488-555; the sequence is HLTANRPKMP…SLSTPSSASK (68 aa). Basic and acidic residues predominate over residues 517-539; sequence KTLKLPKEDDSGNLKPLEFKKDA. A Glycyl lysine isopeptide (Lys-Gly) (interchain with G-Cter in SUMO2) cross-link involves residue lysine 523. Residues 540 to 555 show a composition bias toward low complexity; the sequence is SYSSKSSLSTPSSASK. Threonine 563 bears the Phosphothreonine mark. The stretch at 578-636 forms a coiled coil; the sequence is RNSVDELRAQIIELLCIVDALKKDHGKELEKLRKELEEEKAMRSNLEVEIAKLKKAVLL. Residue serine 580 is modified to Phosphoserine.

Homodimer. Interacts with F-actin, PKD2, NPHS1 and NPHS2. Interacts with WTIP. Interacts with DDN; interaction is direct. Interacts (via SH3 2 domain) with CBL (via phosphorylated C-terminus). Interacts with BCAR1/p130Cas (via SH3 domain). Interacts with MVB12A and ARHGAP17. Interacts with ANLN, CD2 and CBLB. Interacts with PDCD6IP and TSG101. Interacts with RIN3. Interacts directly with RET (inactive) and CBLC; upon RET activation by GDNF suggested to dissociate from RET as CBLC:CD2AP complex. Interacts with CGNL1 and SH3BP1; probably part of a complex at cell junctions. Interacts with CAPZA1. Phosphorylated on tyrosine residues; probably by c-Abl, Fyn and c-Src. As to expression, expressed in podocytes (at protein level).

The protein localises to the cytoplasm. Its subcellular location is the cytoskeleton. It is found in the cell projection. The protein resides in the ruffle. It localises to the cell junction. Functionally, seems to act as an adapter protein between membrane proteins and the actin cytoskeleton. In collaboration with CBLC, modulates the rate of RET turnover and may act as regulatory checkpoint that limits the potency of GDNF on neuronal survival. Controls CBLC function, converting it from an inhibitor to a promoter of RET degradation. May play a role in receptor clustering and cytoskeletal polarity in the junction between T-cell and antigen-presenting cell. May anchor the podocyte slit diaphragm to the actin cytoskeleton in renal glomerolus. Also required for cytokinesis. Plays a role in epithelial cell junctions formation. The polypeptide is CD2-associated protein (Cd2ap) (Mus musculus (Mouse)).